Here is a 182-residue protein sequence, read N- to C-terminus: Inosine/xanthosine triphosphatase (182 aa).

It belongs to the YjjX NTPase family. In terms of assembly, homodimer. Mg(2+) serves as cofactor. Requires Mn(2+) as cofactor.

It catalyses the reaction XTP + H2O = XDP + phosphate + H(+). The enzyme catalyses ITP + H2O = IDP + phosphate + H(+). Its function is as follows. Phosphatase that hydrolyzes non-canonical purine nucleotides such as XTP and ITP to their respective diphosphate derivatives. Probably excludes non-canonical purines from DNA/RNA precursor pool, thus preventing their incorporation into DNA/RNA and avoiding chromosomal lesions. In Vibrio parahaemolyticus serotype O3:K6 (strain RIMD 2210633), this protein is Inosine/xanthosine triphosphatase.